Consider the following 350-residue polypeptide: DNA polymerase IV (350 aa).

Residues 7–188 (IIHIDMDYFF…LPVKKLFGVG (182 aa)) enclose the UmuC domain. Asp11 and Asp106 together coordinate Mg(2+). Glu107 is a catalytic residue.

The protein belongs to the DNA polymerase type-Y family. In terms of assembly, monomer. Mg(2+) serves as cofactor.

The protein localises to the cytoplasm. It catalyses the reaction DNA(n) + a 2'-deoxyribonucleoside 5'-triphosphate = DNA(n+1) + diphosphate. In terms of biological role, poorly processive, error-prone DNA polymerase involved in untargeted mutagenesis. Copies undamaged DNA at stalled replication forks, which arise in vivo from mismatched or misaligned primer ends. These misaligned primers can be extended by PolIV. Exhibits no 3'-5' exonuclease (proofreading) activity. May be involved in translesional synthesis, in conjunction with the beta clamp from PolIII. The sequence is that of DNA polymerase IV from Francisella philomiragia subsp. philomiragia (strain ATCC 25017 / CCUG 19701 / FSC 153 / O#319-036).